Consider the following 290-residue polypeptide: Pyridoxal kinase PdxY (290 aa).

Substrate contacts are provided by residues S12 and 47–48 (TQ). ATP contacts are provided by residues D114, E151, K184, and 211–214 (RPLL). Position 225 (D225) interacts with substrate.

This sequence belongs to the pyridoxine kinase family. PdxY subfamily. Homodimer. Mg(2+) serves as cofactor.

It catalyses the reaction pyridoxal + ATP = pyridoxal 5'-phosphate + ADP + H(+). It participates in cofactor metabolism; pyridoxal 5'-phosphate salvage; pyridoxal 5'-phosphate from pyridoxal: step 1/1. In terms of biological role, pyridoxal kinase involved in the salvage pathway of pyridoxal 5'-phosphate (PLP). Catalyzes the phosphorylation of pyridoxal to PLP. In Pseudomonas fluorescens (strain ATCC BAA-477 / NRRL B-23932 / Pf-5), this protein is Pyridoxal kinase PdxY.